Reading from the N-terminus, the 322-residue chain is Formimidoylglutamase (322 aa).

Mn(2+) is bound by residues H127, D163, H165, D167, D254, and D256.

The protein belongs to the arginase family. Mn(2+) serves as cofactor.

The catalysed reaction is N-formimidoyl-L-glutamate + H2O = formamide + L-glutamate. Its pathway is amino-acid degradation; L-histidine degradation into L-glutamate; L-glutamate from N-formimidoyl-L-glutamate (hydrolase route): step 1/1. Its function is as follows. Catalyzes the conversion of N-formimidoyl-L-glutamate to L-glutamate and formamide. The protein is Formimidoylglutamase of Paraburkholderia xenovorans (strain LB400).